A 20-amino-acid chain; its full sequence is Cytolysin tenebrosin-A (20 aa).

The interval 3–12 (AVAGAVIEGA) is plays an important role in the hemolytic activity. The interval 11 to 20 (GATLTFEVLQ) is N-terminal region.

Belongs to the actinoporin family. Sea anemone subfamily. Octamer or nonamer in membranes. Monomer in the soluble state.

It localises to the secreted. It is found in the nematocyst. The protein localises to the target cell membrane. Pore-forming protein that forms cations-selective hydrophilic pores of around 1 nm and causes cardiac stimulation and cytolysis. Pore formation is a multi-step process that involves specific recognition of membrane sphingomyelin (but neither cholesterol nor phosphatidylcholine) using aromatic rich region and adjacent phosphocholine (POC) binding site, firm binding to the membrane (mainly driven by hydrophobic interactions) accompanied by the transfer of the N-terminal region to the lipid-water interface and finally pore formation after oligomerization of monomers. The chain is Cytolysin tenebrosin-A from Actinia tenebrosa (Australian red waratah sea anemone).